Here is a 202-residue protein sequence, read N- to C-terminus: Recoverin (202 aa).

A lipid anchor (N-myristoyl glycine) is attached at glycine 2. EF-hand domains follow at residues threonine 24–glutamate 59, aspartate 61–glycine 96, lysine 97–methionine 132, and threonine 147–isoleucine 182. Cysteine 39 is subject to Cysteine sulfenic acid (-SOH). Aspartate 74, asparagine 76, aspartate 78, threonine 80, glutamate 85, aspartate 110, aspartate 112, asparagine 114, threonine 116, and glutamate 121 together coordinate Ca(2+). The interaction with GRK1 stretch occupies residues glutamate 189–lysine 192. The tract at residues glutamine 191–leucine 202 is modulates EF-hand 3 domain calcium binding affinity.

This sequence belongs to the recoverin family. In terms of assembly, homodimer; disulfide-linked. Homodimerization is caused by prolonged intense illumination. May form a complex composed of RHO, GRK1 and RCVRN in a Ca(2+)-dependent manner; RCVRN prevents the interaction between GRK1 and RHO. Interacts (via C-terminus) with GRK1 (via N-terminus); the interaction is Ca(2+)-dependent. In terms of processing, the N-terminal glycine is linked to one of four different types of acyl groups. The most abundant is myristoleate (14:1), but 14:0, 14:2, and 12:0 acyl residues are also present. The Ca(2+) induced exposure of the myristoyl group, known as the calcium-myristoyl switch, promotes RCVRN binding to the photoreceptor cell membranes only when intracellular Ca(2+) concentration is high. Post-translationally, oxidation on Cys-39 occurs in response to prolonged intense illumination and results in the formation of disulfide homodimers, and to a lesser extent disulfide-linked heterodimers. In terms of tissue distribution, expressed in the retina (at protein level). Expressed in the pineal gland (at protein level).

The protein localises to the photoreceptor inner segment. The protein resides in the cell projection. Its subcellular location is the cilium. It localises to the photoreceptor outer segment. It is found in the photoreceptor outer segment membrane. The protein localises to the perikaryon. Functionally, acts as a calcium sensor and regulates phototransduction of cone and rod photoreceptor cells. Modulates light sensitivity of cone photoreceptor in dark and dim conditions. In response to high Ca(2+) levels induced by low light levels, prolongs RHO/rhodopsin activation in rod photoreceptor cells by binding to and inhibiting GRK1-mediated phosphorylation of RHO/rhodopsin. Plays a role in scotopic vision/enhances vision in dim light by enhancing signal transfer between rod photoreceptors and rod bipolar cells. Improves rod photoreceptor sensitivity in dim light and mediates response of rod photoreceptors to facilitate detection of change and motion in bright light. The protein is Recoverin (RCVRN) of Bos taurus (Bovine).